A 266-amino-acid chain; its full sequence is Putative carbamate hydrolase RutD (266 aa).

Positions 14 to 119 constitute an AB hydrolase-1 domain; it reads PVVVLSAGLG…LVNGWLSLSP (106 aa).

The protein belongs to the AB hydrolase superfamily. Hydrolase RutD family.

The enzyme catalyses carbamate + 2 H(+) = NH4(+) + CO2. Involved in pyrimidine catabolism. May facilitate the hydrolysis of carbamate, a reaction that can also occur spontaneously. The chain is Putative carbamate hydrolase RutD from Klebsiella pneumoniae subsp. pneumoniae (strain ATCC 700721 / MGH 78578).